The sequence spans 559 residues: Estrogen receptor beta (559 aa).

The tract at residues 1–155 is modulating; it reads MAVACSPEKD…SSGGKADLHF (155 aa). Residues 128–148 are disordered; the sequence is TSSKSARRRSQENEEGEVSSG. 2 NR C4-type zinc fingers span residues 156 to 176 and 192 to 216; these read CAVCHDYASGYHYGVWSCEGC and CPATNQCTIDKNRRKSCQACRLHKC. Positions 156–221 form a DNA-binding region, nuclear receptor; the sequence is CAVCHDYASG…RLHKCYNVGM (66 aa). Residues 243–254 are compositionally biased toward polar residues; that stretch reads RLSSQGRTSGPS. The segment at 243–269 is disordered; sequence RLSSQGRTSGPSVLNGPAVGPLNTPQP. An NR LBD domain is found at 273 to 509; sequence TSKQLIERIM…DLLLEMLDAH (237 aa). The segment at 514–559 is disordered; the sequence is SRLPRRSPQQETVEQCDAPARPHSPGTSGPTNTWTPSCTGGRGEPQ. The segment covering 538-551 has biased composition (polar residues); it reads PGTSGPTNTWTPSC.

This sequence belongs to the nuclear hormone receptor family. NR3 subfamily. Binds DNA as a homodimer. Can form a heterodimer with ER-alpha.

The protein localises to the nucleus. Its function is as follows. Binds estrogens with an affinity similar to that of ER-alpha, and activates expression of reporter genes containing estrogen response elements (ERE) in an estrogen-dependent manner. This chain is Estrogen receptor beta (esr2), found in Sparus aurata (Gilthead sea bream).